The chain runs to 499 residues: Bifunctional purine biosynthesis protein PurH (499 aa).

The 144-residue stretch at 1 to 144 (MIKRALISVF…KNFKDVVVLT (144 aa)) folds into the MGS-like domain.

Belongs to the PurH family.

It catalyses the reaction (6R)-10-formyltetrahydrofolate + 5-amino-1-(5-phospho-beta-D-ribosyl)imidazole-4-carboxamide = 5-formamido-1-(5-phospho-D-ribosyl)imidazole-4-carboxamide + (6S)-5,6,7,8-tetrahydrofolate. It carries out the reaction IMP + H2O = 5-formamido-1-(5-phospho-D-ribosyl)imidazole-4-carboxamide. The protein operates within purine metabolism; IMP biosynthesis via de novo pathway; 5-formamido-1-(5-phospho-D-ribosyl)imidazole-4-carboxamide from 5-amino-1-(5-phospho-D-ribosyl)imidazole-4-carboxamide (10-formyl THF route): step 1/1. It functions in the pathway purine metabolism; IMP biosynthesis via de novo pathway; IMP from 5-formamido-1-(5-phospho-D-ribosyl)imidazole-4-carboxamide: step 1/1. The polypeptide is Bifunctional purine biosynthesis protein PurH (Clostridium botulinum (strain Hall / ATCC 3502 / NCTC 13319 / Type A)).